The chain runs to 335 residues: ATP-dependent 6-phosphofructokinase (335 aa).

Glycine 11 lines the ATP pocket. 21–25 (RAVVR) lines the ADP pocket. ATP is bound by residues 72–73 (RY) and 102–105 (GDGS). Position 103 (aspartate 103) interacts with Mg(2+). Residue 125–127 (TID) participates in substrate binding. Aspartate 127 functions as the Proton acceptor in the catalytic mechanism. Residue arginine 154 participates in ADP binding. Substrate contacts are provided by residues arginine 162 and 169–171 (MGR). Residues 185–187 (GAD) and 213–215 (KKH) each bind ADP. Residues glutamate 222, arginine 244, and 250-253 (HIQR) each bind substrate.

The protein belongs to the phosphofructokinase type A (PFKA) family. ATP-dependent PFK group I subfamily. Prokaryotic clade 'B1' sub-subfamily. In terms of assembly, homotetramer. Mg(2+) serves as cofactor.

It localises to the cytoplasm. The enzyme catalyses beta-D-fructose 6-phosphate + ATP = beta-D-fructose 1,6-bisphosphate + ADP + H(+). Its pathway is carbohydrate degradation; glycolysis; D-glyceraldehyde 3-phosphate and glycerone phosphate from D-glucose: step 3/4. Allosterically activated by ADP and other diphosphonucleosides, and allosterically inhibited by phosphoenolpyruvate. Catalyzes the phosphorylation of D-fructose 6-phosphate to fructose 1,6-bisphosphate by ATP, the first committing step of glycolysis. This Streptococcus pneumoniae (strain CGSP14) protein is ATP-dependent 6-phosphofructokinase.